The primary structure comprises 338 residues: Ketol-acid reductoisomerase (NADP(+)) (338 aa).

The KARI N-terminal Rossmann domain occupies 1-181 (MNVYYDKDCD…GGGRSGIIET (181 aa)). NADP(+) contacts are provided by residues 24-27 (YGSQ), Arg-47, Ser-50, Ser-52, and 82-85 (DEFQ). Residue His-107 is part of the active site. Residue Gly-133 participates in NADP(+) binding. The KARI C-terminal knotted domain maps to 182-327 (TFKDETETDL…AKLRSMMPWI (146 aa)). 4 residues coordinate Mg(2+): Asp-190, Glu-194, Glu-226, and Glu-230. Ser-251 contacts substrate.

Belongs to the ketol-acid reductoisomerase family. The cofactor is Mg(2+).

The enzyme catalyses (2R)-2,3-dihydroxy-3-methylbutanoate + NADP(+) = (2S)-2-acetolactate + NADPH + H(+). The catalysed reaction is (2R,3R)-2,3-dihydroxy-3-methylpentanoate + NADP(+) = (S)-2-ethyl-2-hydroxy-3-oxobutanoate + NADPH + H(+). The protein operates within amino-acid biosynthesis; L-isoleucine biosynthesis; L-isoleucine from 2-oxobutanoate: step 2/4. It participates in amino-acid biosynthesis; L-valine biosynthesis; L-valine from pyruvate: step 2/4. Involved in the biosynthesis of branched-chain amino acids (BCAA). Catalyzes an alkyl-migration followed by a ketol-acid reduction of (S)-2-acetolactate (S2AL) to yield (R)-2,3-dihydroxy-isovalerate. In the isomerase reaction, S2AL is rearranged via a Mg-dependent methyl migration to produce 3-hydroxy-3-methyl-2-ketobutyrate (HMKB). In the reductase reaction, this 2-ketoacid undergoes a metal-dependent reduction by NADPH to yield (R)-2,3-dihydroxy-isovalerate. The sequence is that of Ketol-acid reductoisomerase (NADP(+)) from Psychrobacter sp. (strain PRwf-1).